Reading from the N-terminus, the 437-residue chain is Putative metabolite transport protein NicT (437 aa).

The next 12 helical transmembrane spans lie at 28-48, 66-86, 93-113, 123-143, 152-172, 189-209, 254-274, 290-310, 320-340, 347-367, 374-394, and 411-431; these read LIPF…NVGF, LGAG…NLIL, LWIA…MFVT, FLLG…LTMW, IIAL…PISG, WLFL…FWAL, VWML…MGFW, IGLL…MIGA, WHII…TLFS, VVLF…FFSL, GTAA…AGLV, and AALW…IALP.

This sequence belongs to the major facilitator superfamily.

Its subcellular location is the membrane. Probable transporter, possibly involved in the aerobic nicotinate degradation pathway. The sequence is that of Putative metabolite transport protein NicT (nicT) from Pseudomonas putida (strain ATCC 47054 / DSM 6125 / CFBP 8728 / NCIMB 11950 / KT2440).